A 215-amino-acid chain; its full sequence is Flagellin B1 (215 aa).

Positions 1-12 are excised as a propeptide; sequence MSVKNFMNNKKG.

This sequence belongs to the archaeal flagellin family.

It is found in the archaeal flagellum. Flagellin is the subunit protein which polymerizes to form the filaments of archaeal flagella. This is Flagellin B1 (flaB1) from Methanococcus vannielii (strain ATCC 35089 / DSM 1224 / JCM 13029 / OCM 148 / SB).